Reading from the N-terminus, the 700-residue chain is Acetoacetyl-CoA synthetase (700 aa).

The tract at residues 1–35 (MTAVSANGKTTEKHENGAHTNGTTNGTTNGSMNGN) is disordered. Positions 18-35 (AHTNGTTNGTTNGSMNGN) are enriched in low complexity.

Belongs to the ATP-dependent AMP-binding enzyme family. Present in most cells of the organism.

It is found in the cytoplasm. It localises to the nucleus. The enzyme catalyses acetoacetate + ATP + CoA = acetoacetyl-CoA + AMP + diphosphate. Functionally, activates acetoacetate to acetoacetyl-CoA. Negatively regulates let-60 Ras activity during vulval induction. The sequence is that of Acetoacetyl-CoA synthetase (sur-5) from Caenorhabditis elegans.